The chain runs to 229 residues: Potassium/proton antiporter CemA (229 aa).

3 helical membrane-spanning segments follow: residues alanine 6–cysteine 26, isoleucine 107–alanine 127, and isoleucine 189–isoleucine 209.

This sequence belongs to the CemA family.

It localises to the plastid. Its subcellular location is the chloroplast inner membrane. The enzyme catalyses K(+)(in) + H(+)(out) = K(+)(out) + H(+)(in). Functionally, contributes to K(+)/H(+) antiport activity by supporting proton efflux to control proton extrusion and homeostasis in chloroplasts in a light-dependent manner to modulate photosynthesis. Prevents excessive induction of non-photochemical quenching (NPQ) under continuous-light conditions. Indirectly promotes efficient inorganic carbon uptake into chloroplasts. This is Potassium/proton antiporter CemA from Crucihimalaya wallichii (Rock-cress).